Reading from the N-terminus, the 2150-residue chain is Zinc finger protein sdc-3 (2150 aa).

The interval 443 to 987 (QEITSPMFAL…DQVENEEPER (545 aa)) is dosage compensation domain 1. Disordered regions lie at residues 874–894 (EKEW…EEED), 1261–1373 (GSVV…GPEV), 1411–1448 (FETS…GPIN), and 1491–1670 (EVLQ…SEKL). Over residues 1267-1293 (TNQQEENVTSEGPTLQEGSSIPSSSHI) the composition is skewed to polar residues. Residues 1321-1333 (KKSGKTTRGRPKK) are compositionally biased toward basic residues. A compositionally biased stretch (basic and acidic residues) spans 1347-1357 (GQKEEAAHEPE). Residues 1504–1524 (SSKKRGRRRKKTPPHIAKARK) are compositionally biased toward basic residues. Residues 1508-1516 (RGRRRKKTP) are sex determination domain. Positions 1585–1598 (EDLHETERPGHVGE) are enriched in basic and acidic residues. Positions 1638–1648 (IQSQAGTNASP) are enriched in polar residues. 2 consecutive C2H2-type zinc fingers follow at residues 2078–2105 (HKCV…GKLH) and 2117–2141 (DDCQ…NHHH). Residues 2080 to 2105 (CVQCSIRNQSVYFSSYSLLELHGKLH) are dosage compensation domain 2.

Component of the SDC complex, which consists of sdc-1, sdc-2 and sdc-3. Within the complex, interacts with sdc-1 and sdc-2. Interacts with dpy-21. Sumoylated. Sumoylation is important for assembly of the dosage compensation complex and its robust binding to the X chromosome. Expressed in somatic and in germline tissues in hermaphrodites (XX). In males (XO), only present in embryos younger than the 100-cell stage (at protein level).

Its subcellular location is the chromosome. The protein localises to the nucleus. Component of the SDC complex that functions in sex determination and in X chromosome dosage compensation specifically in hermaphrodite (XX) animals. Plays a central role in the recruitment of the condensin I-like dosage compensation complex to the male sex-determining autosomal gene her-1, thereby contributing to its repression and initiating hermaphrodite sexual development. Involved in the recruitment and assembly of the dosage compensation complex and the dosage compensation protein dpy-21 onto the X chromosomes in hermaphrodites, which leads to a reduction of X-linked gene transcription and an equalization of X-linked gene expression between the sexes. The sequence is that of Zinc finger protein sdc-3 (sdc-3) from Caenorhabditis elegans.